The primary structure comprises 236 residues: Pyridoxine 5'-phosphate synthase (236 aa).

Position 6 (Asn6) interacts with 3-amino-2-oxopropyl phosphate. 8–9 (DH) contacts 1-deoxy-D-xylulose 5-phosphate. Arg17 lines the 3-amino-2-oxopropyl phosphate pocket. The Proton acceptor role is filled by His42. 1-deoxy-D-xylulose 5-phosphate-binding residues include Arg44 and His49. Glu69 serves as the catalytic Proton acceptor. Thr99 is a binding site for 1-deoxy-D-xylulose 5-phosphate. Residue His190 is the Proton donor of the active site. 3-amino-2-oxopropyl phosphate contacts are provided by residues Gly191 and 212-213 (GH).

This sequence belongs to the PNP synthase family. In terms of assembly, homooctamer; tetramer of dimers.

The protein localises to the cytoplasm. It catalyses the reaction 3-amino-2-oxopropyl phosphate + 1-deoxy-D-xylulose 5-phosphate = pyridoxine 5'-phosphate + phosphate + 2 H2O + H(+). The protein operates within cofactor biosynthesis; pyridoxine 5'-phosphate biosynthesis; pyridoxine 5'-phosphate from D-erythrose 4-phosphate: step 5/5. Its function is as follows. Catalyzes the complicated ring closure reaction between the two acyclic compounds 1-deoxy-D-xylulose-5-phosphate (DXP) and 3-amino-2-oxopropyl phosphate (1-amino-acetone-3-phosphate or AAP) to form pyridoxine 5'-phosphate (PNP) and inorganic phosphate. This Chlorobium phaeobacteroides (strain DSM 266 / SMG 266 / 2430) protein is Pyridoxine 5'-phosphate synthase.